The chain runs to 197 residues: RNA-binding protein with multiple splicing (197 aa).

M1 carries the N-acetylmethionine modification. Phosphothreonine is present on T12. In terms of domain architecture, RRM spans 24-101; sequence RTLFVSGLPL…QTLRLEFAKA (78 aa). Residues 98-105 form an interaction with RNA region; the sequence is FAKANTKM. T113 is modified (phosphothreonine).

As to quaternary structure, homodimer; each protein chain binds one RNA molecule via the external surface of the homodimer. Interacts with RNA binding proteins MBNL1, RBFOX2, RBM4 and RBM14; the interaction allows cooperative assembly of stable cell-specific alternative splicing regulatory complexes. Also interacts with RBM47, MATR3 and ESRP2. Interacts with SMAD2, SMAD3 and SMAD4; the interactions are direct. As to expression, mRNA expressed in developing heart, with significantly higher expression in the atria relative to the ventricles.

Its subcellular location is the nucleus. The protein localises to the cytoplasm. The protein resides in the stress granule. It is found in the P-body. RNA binding protein that mediates the regulation of pre-mRNA alternative splicing (AS). Acts either as activator (FLNB, HSPG2, LIPA1, MYOCD, PTPRF and PPFIBP1) or repressor (TPM1, ACTN1, ITGA7, PIEZO1, LSM14B, MBNL1 and MBML2) of splicing events on specific pre-mRNA targets. Together with RNA binding proteins RBFOX2 and MBNL1/2, activates a splicing program associated with differentiated contractile vascular smooth muscle cells (SMC) by regulating AS of numerous pre-mRNA involved in actin cytoskeleton and focal adhesion machineries, suggesting a role in promoting a cell differentiated state. Binds to introns, exons and 3'-UTR associated with tandem CAC trinucleotide motifs separated by a variable spacer region, at a minimum as a dimer. The minimal length of RNA required for RBPMS-binding tandem CAC motifs is 15 nt, with spacing ranging from 1 to 9 nt. Can also bind to CA dinucleotide repeats. Mediates repression of TPM1 exon 3 by binding to CAC tandem repeats in the flanking intronic regions, followed by higher-order oligomerization and heterotypic interactions with other splicing regulators including MBNL1 and RBFOX2, which prevents assembly of ATP-dependent splicing complexes. The protein is RNA-binding protein with multiple splicing of Mus musculus (Mouse).